The chain runs to 119 residues: Protein yippee-like 2 (119 aa).

Residues Arg-19–Asn-116 enclose the Yippee domain. Positions 23, 26, 79, and 82 each coordinate Zn(2+).

This sequence belongs to the yippee family. As to quaternary structure, may interact with FAM168B.

The protein resides in the nucleus. It is found in the nucleolus. The polypeptide is Protein yippee-like 2 (YPEL2) (Chlorocebus aethiops (Green monkey)).